Consider the following 783-residue polypeptide: Mitochondrial intermediate peptidase (783 aa).

A mitochondrion-targeting transit peptide spans 1–33 (MKAGIPLSRCTQRIPLLVARQVSRNITTTTTKF). Position 565 (H565) interacts with Zn(2+). The active site involves E566. The Zn(2+) site is built by H569 and H572.

The protein belongs to the peptidase M3 family. The cofactor is Zn(2+).

Its subcellular location is the mitochondrion matrix. It catalyses the reaction Release of an N-terminal octapeptide as second stage of processing of some proteins imported into the mitochondrion.. Functionally, cleaves proteins, imported into the mitochondrion, to their mature size. While most mitochondrial precursor proteins are processed to the mature form in one step by mitochondrial processing peptidase (MPP), the sequential cleavage by MIP of an octapeptide after initial processing by MPP is a required step for a subgroup of nuclear-encoded precursor proteins destined for the matrix or the inner membrane. This is Mitochondrial intermediate peptidase (OCT1) from Candida albicans (strain SC5314 / ATCC MYA-2876) (Yeast).